We begin with the raw amino-acid sequence, 434 residues long: Adenylosuccinate synthetase (434 aa).

GTP contacts are provided by residues 22–28 (GDEGKGK) and 50–52 (GHT). Aspartate 23 serves as the catalytic Proton acceptor. Residues aspartate 23 and glycine 50 each coordinate Mg(2+). IMP-binding positions include 23-26 (DEGK), 48-51 (NAGH), threonine 139, arginine 153, glutamine 234, threonine 249, and arginine 313. Residue histidine 51 is the Proton donor of the active site. 309–315 (ATTGRKR) serves as a coordination point for substrate. GTP is bound by residues arginine 315, 341–343 (KLD), and 423–425 (SVG).

The protein belongs to the adenylosuccinate synthetase family. Homodimer. Mg(2+) serves as cofactor.

Its subcellular location is the cytoplasm. The enzyme catalyses IMP + L-aspartate + GTP = N(6)-(1,2-dicarboxyethyl)-AMP + GDP + phosphate + 2 H(+). Its pathway is purine metabolism; AMP biosynthesis via de novo pathway; AMP from IMP: step 1/2. Plays an important role in the de novo pathway of purine nucleotide biosynthesis. Catalyzes the first committed step in the biosynthesis of AMP from IMP. This is Adenylosuccinate synthetase from Chlorobium limicola (strain DSM 245 / NBRC 103803 / 6330).